The primary structure comprises 289 residues: 4-diphosphocytidyl-2-C-methyl-D-erythritol kinase (289 aa).

The active site involves K10. 99–109 is a binding site for ATP; it reads PMGGGLGGGSS. The active site involves D141.

This sequence belongs to the GHMP kinase family. IspE subfamily. In terms of assembly, homodimer.

It catalyses the reaction 4-CDP-2-C-methyl-D-erythritol + ATP = 4-CDP-2-C-methyl-D-erythritol 2-phosphate + ADP + H(+). It participates in isoprenoid biosynthesis; isopentenyl diphosphate biosynthesis via DXP pathway; isopentenyl diphosphate from 1-deoxy-D-xylulose 5-phosphate: step 3/6. Functionally, catalyzes the phosphorylation of the position 2 hydroxy group of 4-diphosphocytidyl-2C-methyl-D-erythritol. In Enterobacter sp. (strain 638), this protein is 4-diphosphocytidyl-2-C-methyl-D-erythritol kinase.